We begin with the raw amino-acid sequence, 739 residues long: DEAD-box ATP-dependent RNA helicase 32 (739 aa).

Positions 71–99 match the Q motif motif; that stretch reads RKFAQLPISDKTKRGLKDAKYVDMTDVQS. The Helicase ATP-binding domain maps to 102–277; sequence IPHALCGRDI…RLSLRDPEYI (176 aa). Position 115–122 (115–122) interacts with ATP; it reads ARTGSGKT. Positions 225-228 match the DEAD box motif; that stretch reads DEAD. One can recognise a Helicase C-terminal domain in the interval 303 to 461; sequence KLDMLWSFIK…EVSRLLAALL (159 aa). The stretch at 643–689 forms a coiled coil; that stretch reads GAEMRKADIEDKKVDKERRREKRMKQKIKRKRGAMEDEEEEEEEDHD. Residues 656-725 form a disordered region; the sequence is VDKERRREKR…GGKINTDSLS (70 aa). Positions 661–674 are enriched in basic residues; it reads RREKRMKQKIKRKR. Residues 678 to 688 show a composition bias toward acidic residues; that stretch reads EDEEEEEEEDH.

The protein belongs to the DEAD box helicase family. DDX10/DBP4 subfamily.

The enzyme catalyses ATP + H2O = ADP + phosphate + H(+). The protein is DEAD-box ATP-dependent RNA helicase 32 (RH32) of Arabidopsis thaliana (Mouse-ear cress).